Reading from the N-terminus, the 73-residue chain is MSKKKDVIEMEGTITEPLPNAMFRVQLDNGHEVLAHISGKMRMNYIRILKGDRVLVELSPYDLTRGRITYRYK.

Residues 1 to 73 enclose the S1-like domain; that stretch reads MSKKKDVIEM…TRGRITYRYK (73 aa).

The protein belongs to the IF-1 family. In terms of assembly, component of the 30S ribosomal translation pre-initiation complex which assembles on the 30S ribosome in the order IF-2 and IF-3, IF-1 and N-formylmethionyl-tRNA(fMet); mRNA recruitment can occur at any time during PIC assembly.

Its subcellular location is the cytoplasm. In terms of biological role, one of the essential components for the initiation of protein synthesis. Stabilizes the binding of IF-2 and IF-3 on the 30S subunit to which N-formylmethionyl-tRNA(fMet) subsequently binds. Helps modulate mRNA selection, yielding the 30S pre-initiation complex (PIC). Upon addition of the 50S ribosomal subunit IF-1, IF-2 and IF-3 are released leaving the mature 70S translation initiation complex. The protein is Translation initiation factor IF-1 of Chloroflexus aurantiacus (strain ATCC 29366 / DSM 635 / J-10-fl).